Here is a 248-residue protein sequence, read N- to C-terminus: Small ribosomal subunit protein uS2c (248 aa).

Belongs to the universal ribosomal protein uS2 family.

The protein localises to the plastid. The protein resides in the chloroplast. The chain is Small ribosomal subunit protein uS2c (rps2) from Trachelium caeruleum (Blue throatwort).